We begin with the raw amino-acid sequence, 387 residues long: 8-amino-7-oxononanoate synthase (387 aa).

Residue arginine 20 participates in substrate binding. 107 to 108 (GY) is a pyridoxal 5'-phosphate binding site. Residue histidine 132 participates in substrate binding. Pyridoxal 5'-phosphate-binding residues include serine 181, histidine 209, and threonine 238. Lysine 241 carries the N6-(pyridoxal phosphate)lysine modification. Threonine 355 lines the substrate pocket.

This sequence belongs to the class-II pyridoxal-phosphate-dependent aminotransferase family. BioF subfamily. Homodimer. Pyridoxal 5'-phosphate serves as cofactor.

It carries out the reaction 6-carboxyhexanoyl-[ACP] + L-alanine + H(+) = (8S)-8-amino-7-oxononanoate + holo-[ACP] + CO2. It functions in the pathway cofactor biosynthesis; biotin biosynthesis. Functionally, catalyzes the decarboxylative condensation of pimeloyl-[acyl-carrier protein] and L-alanine to produce 8-amino-7-oxononanoate (AON), [acyl-carrier protein], and carbon dioxide. This chain is 8-amino-7-oxononanoate synthase, found in Dechloromonas aromatica (strain RCB).